Consider the following 681-residue polypeptide: Kojibiose hydrolase (681 aa).

The signal sequence occupies residues 1–23; it reads MKKYIFNHVFFFLMLCGSNYLYS. Beta-D-glucose contacts are provided by Arg-74, Trp-343, Asp-344, Trp-391, Glu-392, Thr-407, Glu-472, Trp-473, Lys-538, Gln-539, and Asp-573. Glu-472 serves as the catalytic Proton donor. Catalysis depends on Glu-616, which acts as the Proton acceptor.

It belongs to the glycosyl hydrolase 65 family. Homohexamer; dimer of trimers.

It localises to the periplasm. It carries out the reaction kojibiose + H2O = beta-D-glucose + D-glucose. Its function is as follows. Glycosidase that specifically hydrolyzes kojibiose to beta-glucose and glucose. Also hydrolyzes, with lower catalytic efficiency, longer kojioligosaccharides (from kojitriose to kojipentaose) and shorter oligosaccharides produced by the degradation of dextran-containing alpha-1,2 branches. Probably acts on alpha-(1-&gt;2)-glucosyl isomaltooligosaccharides. Shows weak activity with nigerose but has no activity toward p-nitrophenyl alpha-glucopyranoside, which is a general substrate of exo-acting alpha-glucoside hydrolases. Has a strict specificity for alpha-1,2-glucosidic linkages. Catalyzes the hydrolytic reaction via an anomer-inverting mechanism. The chain is Kojibiose hydrolase from Flavobacterium johnsoniae (strain ATCC 17061 / DSM 2064 / JCM 8514 / BCRC 14874 / CCUG 350202 / NBRC 14942 / NCIMB 11054 / UW101) (Cytophaga johnsonae).